Here is a 578-residue protein sequence, read N- to C-terminus: Proline--tRNA ligase (578 aa).

Belongs to the class-II aminoacyl-tRNA synthetase family. ProS type 1 subfamily. As to quaternary structure, homodimer.

The protein localises to the cytoplasm. It carries out the reaction tRNA(Pro) + L-proline + ATP = L-prolyl-tRNA(Pro) + AMP + diphosphate. In terms of biological role, catalyzes the attachment of proline to tRNA(Pro) in a two-step reaction: proline is first activated by ATP to form Pro-AMP and then transferred to the acceptor end of tRNA(Pro). As ProRS can inadvertently accommodate and process non-cognate amino acids such as alanine and cysteine, to avoid such errors it has two additional distinct editing activities against alanine. One activity is designated as 'pretransfer' editing and involves the tRNA(Pro)-independent hydrolysis of activated Ala-AMP. The other activity is designated 'posttransfer' editing and involves deacylation of mischarged Ala-tRNA(Pro). The misacylated Cys-tRNA(Pro) is not edited by ProRS. The sequence is that of Proline--tRNA ligase from Paraburkholderia xenovorans (strain LB400).